The primary structure comprises 296 residues: 4-hydroxy-tetrahydrodipicolinate synthase (296 aa).

Position 49 (Thr-49) interacts with pyruvate. Catalysis depends on Tyr-137, which acts as the Proton donor/acceptor. The Schiff-base intermediate with substrate role is filled by Lys-166. Residue Ile-208 coordinates pyruvate.

This sequence belongs to the DapA family. In terms of assembly, homotetramer; dimer of dimers.

Its subcellular location is the cytoplasm. The catalysed reaction is L-aspartate 4-semialdehyde + pyruvate = (2S,4S)-4-hydroxy-2,3,4,5-tetrahydrodipicolinate + H2O + H(+). The protein operates within amino-acid biosynthesis; L-lysine biosynthesis via DAP pathway; (S)-tetrahydrodipicolinate from L-aspartate: step 3/4. In terms of biological role, catalyzes the condensation of (S)-aspartate-beta-semialdehyde [(S)-ASA] and pyruvate to 4-hydroxy-tetrahydrodipicolinate (HTPA). The sequence is that of 4-hydroxy-tetrahydrodipicolinate synthase from Azobacteroides pseudotrichonymphae genomovar. CFP2.